We begin with the raw amino-acid sequence, 567 residues long: PHD finger protein 1 (567 aa).

Residues 1-31 (MAQPPRLSRSGASSLWDPASPAPTSGPRPRL) form a disordered region. One can recognise a Tudor domain in the interval 29 to 86 (PRLWEGQDVLARWTDGLLYLGTIKKVDSAREVCLVQFEDDSQFLVLWKDISPAALPGE). 2 consecutive PHD-type zinc fingers follow at residues 87–142 (ELLC…CVFA) and 186–240 (QSYC…CRGG). Disordered regions lie at residues 333 to 441 (ARMP…TDAR) and 455 to 537 (HPSA…GYLS). Phosphoserine is present on Gly360. Over residues 371–386 (PEPEPLRRRQKGKVEE) the composition is skewed to basic and acidic residues. Ser420 is subject to Phosphoserine. Low complexity-rich tracts occupy residues 423-433 (PNQSYQGSSGY), 456-470 (PSASTAGTSGDSGPP), and 488-510 (SAPHSMTASSSSVSSPSPGLPRR). The span at 524 to 534 (GTGGGVRGGVG) shows a compositional bias: gly residues.

The protein belongs to the Polycomblike family. Interacts with CHMP1. Associated component of the PRC2 complex. Interacts with p53/TP53. In terms of tissue distribution, highest levels in heart, skeletal muscle, and pancreas, lower levels in brain, placenta, lung, liver and kidney.

Its subcellular location is the nucleus. It localises to the cytoplasm. The protein localises to the cytoskeleton. The protein resides in the microtubule organizing center. It is found in the centrosome. Polycomb group (PcG) that specifically binds histone H3 trimethylated at 'Lys-36' (H3K36me3) and recruits the PRC2 complex. Involved in DNA damage response and is recruited at double-strand breaks (DSBs). Acts by binding to H3K36me3, a mark for transcriptional activation, and recruiting the PRC2 complex: it is however unclear whether recruitment of the PRC2 complex to H3K36me3 leads to enhance or inhibit H3K27me3 methylation mediated by the PRC2 complex. According to some reports, PRC2 recruitment by PHF1 promotes H3K27me3 and subsequent gene silencing by inducing spreading of PRC2 and H3K27me3 into H3K36me3 loci. According to another report, PHF1 recruits the PRC2 complex at double-strand breaks (DSBs) and inhibits the activity of PRC2. Regulates p53/TP53 stability and prolonges its turnover: may act by specifically binding to a methylated from of p53/TP53. The polypeptide is PHD finger protein 1 (PHF1) (Homo sapiens (Human)).